Consider the following 686-residue polypeptide: DNA ligase (686 aa).

NAD(+) contacts are provided by residues 34 to 38 (DAEYD), 83 to 84 (SI), and Glu120. The N6-AMP-lysine intermediate role is filled by Lys122. Arg143, Glu180, Lys298, and Lys322 together coordinate NAD(+). Cys420, Cys423, Cys438, and Cys444 together coordinate Zn(2+). The 84-residue stretch at 603 to 686 (QSGGILSGKT…ALLGSNKKNG (84 aa)) folds into the BRCT domain.

It belongs to the NAD-dependent DNA ligase family. LigA subfamily. It depends on Mg(2+) as a cofactor. The cofactor is Mn(2+).

It catalyses the reaction NAD(+) + (deoxyribonucleotide)n-3'-hydroxyl + 5'-phospho-(deoxyribonucleotide)m = (deoxyribonucleotide)n+m + AMP + beta-nicotinamide D-nucleotide.. Its function is as follows. DNA ligase that catalyzes the formation of phosphodiester linkages between 5'-phosphoryl and 3'-hydroxyl groups in double-stranded DNA using NAD as a coenzyme and as the energy source for the reaction. It is essential for DNA replication and repair of damaged DNA. The chain is DNA ligase from Thiobacillus denitrificans (strain ATCC 25259 / T1).